A 194-amino-acid polypeptide reads, in one-letter code: MQLLKDRIRKDGIVKQGNVLKVDSFLNHQMDIELINEIGKEFKRLFEKEKITKILTIEASGIGIACIVAQYFNVPVVFAKKAQSINIEGEVFATKIESFTHKKTYDVIVSKKFLKPSDRVLIIDDFLANGCALVGLIDLVISSGASVEGIGIVIEKGFQSGGEIIREMGIHLESLAIVDSMNAEDGTVVFRGDK.

2 residues coordinate xanthine: L20 and N27. Position 128-132 (128-132 (ANGCA)) interacts with 5-phospho-alpha-D-ribose 1-diphosphate. Residue K156 participates in xanthine binding.

This sequence belongs to the purine/pyrimidine phosphoribosyltransferase family. Xpt subfamily. In terms of assembly, homodimer.

The protein localises to the cytoplasm. The enzyme catalyses XMP + diphosphate = xanthine + 5-phospho-alpha-D-ribose 1-diphosphate. It participates in purine metabolism; XMP biosynthesis via salvage pathway; XMP from xanthine: step 1/1. Functionally, converts the preformed base xanthine, a product of nucleic acid breakdown, to xanthosine 5'-monophosphate (XMP), so it can be reused for RNA or DNA synthesis. This is Xanthine phosphoribosyltransferase from Lachnoclostridium phytofermentans (strain ATCC 700394 / DSM 18823 / ISDg) (Clostridium phytofermentans).